The sequence spans 266 residues: Killer cell lectin-like receptor 6 (266 aa).

The Cytoplasmic segment spans residues 1-44; it reads MSEPEVTYSTVRLHKSSRLQKLVRHEETQGPREAGYRKCSVCWQ. The chain crosses the membrane as a helical; Signal-anchor for type II membrane protein span at residues 45-66; it reads LIVKALGILCFLLLITVAVLAV. The Extracellular segment spans residues 67–266; that stretch reads KIFQYGQHNQ…CGKKLDKFPH (200 aa). Residues N87 and N104 are each glycosylated (N-linked (GlcNAc...) asparagine). The C-type lectin domain maps to 143–261; sequence GVKYWFCYRT…SHYCICGKKL (119 aa). 4 cysteine pairs are disulfide-bonded: C149–C154, C167–C255, C171–C257, and C236–C249.

Homodimer; disulfide-linked.

The protein resides in the membrane. Its function is as follows. Receptor on natural killer (NK) cells for class I MHC. The chain is Killer cell lectin-like receptor 6 (Klra6) from Mus musculus (Mouse).